The following is a 500-amino-acid chain: Trans-cinnamate 4-monooxygenase (500 aa).

The helical transmembrane segment at 3-23 threads the bilayer; it reads ALLVEKVLLGLFVAAVLALVV. Residues 213–218 and Ala302 each bind (E)-cinnamate; that span reads RSRLSQ. Residue Cys442 participates in heme binding.

This sequence belongs to the cytochrome P450 family. Heme is required as a cofactor. Expressed in roots and leaves.

The protein localises to the membrane. It carries out the reaction (E)-cinnamate + reduced [NADPH--hemoprotein reductase] + O2 = (E)-4-coumarate + oxidized [NADPH--hemoprotein reductase] + H2O + H(+). The protein operates within phenylpropanoid metabolism; trans-4-coumarate biosynthesis; trans-4-coumarate from trans-cinnamate: step 1/1. Its function is as follows. Catalyzes the first oxidative step of the phenylpropanoid pathway in higher plants by transforming trans-cinnamate into p-coumarate. The compounds formed by this pathway are essential components for lignification, pollination, and defense against ultraviolet light, predators and pathogens. The protein is Trans-cinnamate 4-monooxygenase of Oryza sativa subsp. japonica (Rice).